A 141-amino-acid polypeptide reads, in one-letter code: Putative phosphatidylglycerol/phosphatidylinositol transfer protein DDB_G0278295 (141 aa).

The N-terminal stretch at 1-19 (MRLLLALFFVLALVSPSFT) is a signal peptide. N-linked (GlcNAc...) asparagine glycosylation is found at Asn82 and Asn104.

It belongs to the NPC2 family. Monomer.

Functionally, catalyzes the intermembrane transfer of phosphatidylglycerol and phosphatidylinositol. The chain is Putative phosphatidylglycerol/phosphatidylinositol transfer protein DDB_G0278295 from Dictyostelium discoideum (Social amoeba).